A 107-amino-acid polypeptide reads, in one-letter code: Keratin, type I cytoskeletal 20 (107 aa).

The tract at residues 1–7 (GNLWVGN) is head. A coil 1A region spans residues 8-43 (EKMTMKNLNDRLASYLEKVRSLEQSNSKFELQIKQW). Residues 8–107 (EKMTMKNLND…ETERGIRLAV (100 aa)) form the IF rod domain. The tract at residues 44–61 (YESNTPGISRDHSAYLQQ) is linker 1. Residues 62–107 (IQDLRNQIRDAQLQNARCVLQIDNAKLAAEDFRLKYETERGIRLAV) are coil 1B.

It belongs to the intermediate filament family. As to quaternary structure, heterotetramer of two type I and two type II keratins. Associates with KRT8.

Its function is as follows. Plays a significant role in maintaining keratin filament organization in intestinal epithelia. When phosphorylated, plays a role in the secretion of mucin in the small intestine. In Sus scrofa (Pig), this protein is Keratin, type I cytoskeletal 20.